Consider the following 1701-residue polypeptide: Merozoite surface protein 1 (1701 aa).

The first 19 residues, 1–19 (MKIIFFLCSFLFFIINTQC), serve as a signal peptide directing secretion. The span at 89-100 (GSGGSVASGGSG) shows a compositional bias: gly residues. Positions 89–118 (GSGGSVASGGSGNSRRTNPSDNSSDSNTKT) are disordered. Residues 101 to 116 (NSRRTNPSDNSSDSNT) are compositionally biased toward low complexity. 2 N-linked (GlcNAc...) asparagine glycosylation sites follow: asparagine 110 and asparagine 239. Residues 322-344 (DAENPTTGSKPNPLPENKKKEVE) are disordered. Asparagine 470, asparagine 536, and asparagine 607 each carry an N-linked (GlcNAc...) asparagine glycan. Residues 704-739 (SETTEDGGHSTHTLSQSGETEVTEETEVTEETVGHT) form a disordered region. The span at 724-733 (EVTEETEVTE) shows a compositional bias: acidic residues. Residues asparagine 802, asparagine 899, asparagine 919, asparagine 965, asparagine 991, asparagine 1089, and asparagine 1196 are each glycosylated (N-linked (GlcNAc...) asparagine). Residues 889–927 (TGTSSTSSPGNTTVNTAQSATHSNSQNQQSNASSTNTQN) show a composition bias toward low complexity. The interval 889–936 (TGTSSTSSPGNTTVNTAQSATHSNSQNQQSNASSTNTQNGVAVSSGPA) is disordered. 2 disordered regions span residues 1231–1259 (PPQP…TQIP) and 1451–1472 (KEKF…DEQK). Polar residues predominate over residues 1245 to 1259 (VSGSSGSTKEETQIP). Residues 1456–1465 (SSPPTTPPSP) show a composition bias toward pro residues. The N-linked (GlcNAc...) asparagine glycan is linked to asparagine 1588. EGF-like domains lie at 1592–1632 (HQCV…VENP) and 1633–1680 (NPTC…IFCS). 6 disulfide bridges follow: cysteine 1594-cysteine 1605, cysteine 1599-cysteine 1615, cysteine 1617-cysteine 1628, cysteine 1636-cysteine 1649, cysteine 1643-cysteine 1663, and cysteine 1665-cysteine 1679. A lipid anchor (GPI-anchor amidated serine) is attached at serine 1680. Positions 1681–1701 (SSNFLGISFLLILMLILYSFI) are cleaved as a propeptide — removed in mature form.

In terms of assembly, forms a complex composed of subunits p83, p30, p38, and p42 which remain non-covalently associated; the complex is formed at the merozoite surface prior to egress from host erythrocytes. Forms a complex composed of processed MSP1 subunits, MSP6 subunit p36 and MSP7; the complex is formed at the merozoite surface prior to egress from host erythrocytes. Within the complex, interacts (via subunit p38) with MSP6 subunit p36 and (via subunits p83, p30 and p38) with MSP7 (via subunit p22). Forms a complex composed of MSP1, MSP6, DBLMSP1 and DBLMSP2. Within the complex, interacts (via subunit p38) with DBLMSP1 and DBLMSP2. Forms a complex composed of MSP1, and rhoptry proteins RhopH3, RAP1 and CLAG9/RhopH3. Within the complex, interacts (via subunits p42 and p19) with RhopH3 (via C-terminus). Forms a complex composed of MSP1, MSP6, MSP7, MSP9 and MSP3; within the complex, MSP6 and MSP9 mediate the binding to the host erythrocyte. Interacts (via subunits p19 and p42) with MSP9; the interaction is direct; MSP1 subunits p19 or p42, and MSP9 form a co-ligand complex that interacts with host SLC4A1/Band 3 protein. May interact with PFD6. Interacts with host spectrin. Interacts with host glycophorin GYPA in a sialic acid-independent manner. As to quaternary structure, interacts with host proinflammatory cytokine S100P; the interaction blocks S100P inflammatory and chemotactic activities. In terms of assembly, interacts with host SLC4A1/Band 3 (via 5ABC region) on the host erythrocyte surface in a sialic acid-independent manner. In terms of processing, the p190 precursor is cleaved by SUB1 prior to merozoite egress into 4 subunits p83, p30, p38, and p42 which remain non-covalently associated. SUB1-mediated proteolytic cleavage occurs in an orderly manner; the first cleavage occurs at the p30/p38 site, followed by cleavage at the p83/p30 site, in the 3D7 strain a second cleavage occurs at the N-terminus of p83, the last cleavage occurs at the p38/p42 site. The order of cleavage is essential for parasite viability. SUB1-mediated processing is essential for merozoite egress. In a second processing step during erythrocyte invasion, p42 is cleaved by SUB2 into p33 and p19; the latter remains attached to the merozoite surface via its GPI-anchor and is endocytosed during the subsequent ring stage.

The protein resides in the cell membrane. It localises to the secreted. Its subcellular location is the vacuole membrane. In terms of biological role, during the asexual blood stage, involved in merozoite egress from host erythrocytes possibly via its interaction with the host cytoskeleton protein spectrin resulting in the destabilization of the host cytoskeleton and thus leading to erythrocyte cell membrane rupture. Involved in the binding to host erythrocytes and is required for host erythrocyte invasion. Functionally, by binding to host proinflammatory cytokine S100P may interfere with host immune responses. Its function is as follows. Involved in merozoite invasion of host erythrocytes. May play a role in the biogenesis and/or function of the food vacuole during the intraerythrocytic development. The chain is Merozoite surface protein 1 from Plasmodium falciparum (isolate FC27 / Papua New Guinea).